The following is a 303-amino-acid chain: uncharacterized protein (303 aa).

6 helical membrane passes run 12-32, 81-101, 117-137, 174-194, 208-228, and 265-286; these read GLPIGSPMYAHLLAGAFSGIL, ISSVIMGAGPSHAIYFSVLEF, ALAGACAITISDAFMTPFDVI, CIAMSIPFTAIQVATYDTCMS, IISGGLSGAIASSLTTPLDVV, and FFKGIRPRMVVAMPATAVSWAA. Solcar repeat units lie at residues 17-105, 111-195, and 206-293; these read SPMY…FKSK, DRPL…CMSF, and SHII…GKEI.

It belongs to the mitochondrial carrier (TC 2.A.29) family.

Its subcellular location is the mitochondrion inner membrane. This is an uncharacterized protein from Schizosaccharomyces pombe (strain 972 / ATCC 24843) (Fission yeast).